Here is a 309-residue protein sequence, read N- to C-terminus: Taste receptor type 2 member 8 (309 aa).

Over M1 to N7 the chain is Extracellular. A helical membrane pass occupies residues I8–A28. Residues L29–N50 lie on the Cytoplasmic side of the membrane. The helical transmembrane segment at L51–L71 threads the bilayer. The Extracellular segment spans residues N72 to Q82. Residues I83–L103 traverse the membrane as a helical segment. The Cytoplasmic portion of the chain corresponds to N104 to H131. Residues W132–L152 traverse the membrane as a helical segment. At S153–T184 the chain is on the extracellular side. N-linked (GlcNAc...) asparagine glycosylation occurs at N167. The helical transmembrane segment at L185–V205 threads the bilayer. At R206–S239 the chain is on the cytoplasmic side. A helical transmembrane segment spans residues F240–M260. The Extracellular portion of the chain corresponds to T261–A266. A helical transmembrane segment spans residues V267–V287. Residues L288–I309 are Cytoplasmic-facing.

The protein belongs to the G-protein coupled receptor T2R family.

The protein resides in the membrane. Receptor that may play a role in the perception of bitterness and is gustducin-linked. May play a role in sensing the chemical composition of the gastrointestinal content. The activity of this receptor may stimulate alpha gustducin, mediate PLC-beta-2 activation and lead to the gating of TRPM5. The sequence is that of Taste receptor type 2 member 8 (TAS2R8) from Pan paniscus (Pygmy chimpanzee).